The primary structure comprises 693 residues: Polyribonucleotide nucleotidyltransferase (693 aa).

The Mg(2+) site is built by Asp489 and Asp495. Positions 556–615 constitute a KH domain; it reads PQIHVMNINPAKIKDVVGRGGATVKGIVEKTGAQIDTSDSGEVKVFAKDKKSMDMAVAMI. Residues 625 to 693 form the S1 motif domain; it reads GQVYKGKIVK…GRVKLSLVAR (69 aa).

This sequence belongs to the polyribonucleotide nucleotidyltransferase family. In terms of assembly, component of the RNA degradosome, which is a multiprotein complex involved in RNA processing and mRNA degradation. Requires Mg(2+) as cofactor.

The protein resides in the cytoplasm. The enzyme catalyses RNA(n+1) + phosphate = RNA(n) + a ribonucleoside 5'-diphosphate. In terms of biological role, involved in mRNA degradation. Catalyzes the phosphorolysis of single-stranded polyribonucleotides processively in the 3'- to 5'-direction. The protein is Polyribonucleotide nucleotidyltransferase of Francisella tularensis subsp. tularensis (strain FSC 198).